The primary structure comprises 372 residues: Serine protease 44 (372 aa).

Residues 1 to 25 (MAFQGCDCFGLLVWLLLLQTRLGKA) form the signal peptide. The Extracellular portion of the chain corresponds to 26-351 (RMVPGTPSLS…KELSRASCWK (326 aa)). The tract at residues 31–72 (TPSLSPLPSENGLDDSGVNPQERPLTGMPETSLPRKPGDSTR) is disordered. Residues 112–345 (IVGGRPAPAR…YRDWIIKELS (234 aa)) form the Peptidase S1 domain. The cysteines at positions 137 and 153 are disulfide-linked. Active-site charge relay system residues include His152 and Asp197. Residue Asn208 is glycosylated (N-linked (GlcNAc...) asparagine). Disulfide bonds link Cys231/Cys303, Cys262/Cys283, and Cys293/Cys321. Ser297 acts as the Charge relay system in catalysis. A helical membrane pass occupies residues 352-372 (LSGFLVLSVCLVLHLAIVVAL).

It belongs to the peptidase S1 family. In terms of tissue distribution, testis-specific. Expressed by primary and secondary spermatocytes.

The protein resides in the membrane. The protein localises to the cytoplasm. Its function is as follows. Lacks protease activity in vitro. In Mus musculus (Mouse), this protein is Serine protease 44.